Consider the following 134-residue polypeptide: Small ribosomal subunit protein uS11 (134 aa).

The segment at 1–21 (MPPKSRQGAGRKVRRKEKKNV) is disordered. The segment covering 9–21 (AGRKVRRKEKKNV) has biased composition (basic residues).

The protein belongs to the universal ribosomal protein uS11 family. In terms of assembly, part of the 30S ribosomal subunit. Interacts with proteins S7 and S18. Binds to IF-3.

Located on the platform of the 30S subunit, it bridges several disparate RNA helices of the 16S rRNA. Forms part of the Shine-Dalgarno cleft in the 70S ribosome. The polypeptide is Small ribosomal subunit protein uS11 (Thermobifida fusca (strain YX)).